A 273-amino-acid chain; its full sequence is MYRLAAFDMDGTLLMRDHKIGSITLNALHQLADAGVTLTFATGRHYLDMKGILSHSGLNGYLITGNGTRVCDAEGNPLYGMDLPAELVEFVLRTPWQTNASIHLFRDDGWFTDRNDPDLLIAHTTSGFHFQLTEWDELPLTGNHKFCFIASHQELVELKAQLEQQMGGEADFCFSATDCLEVLPRGCNKGVALEKLSHHLDLTLADCMAFGDAMNDKEMLSRVGRGLVMGNALPQLKQELPQLQIIGRCEQQGVAHYLHHWLSSPHLTYSPEF.

Residue D8 is the Nucleophile of the active site. 3 residues coordinate Mg(2+): D8, D10, and D212.

It belongs to the HAD-like hydrolase superfamily. Cof family. Requires Mg(2+) as cofactor.

It catalyses the reaction 4-amino-2-methyl-5-(diphosphooxymethyl)pyrimidine + H2O = 4-amino-2-methyl-5-(phosphooxymethyl)pyrimidine + phosphate + H(+). In terms of biological role, catalyzes the hydrolysis of 4-amino-2-methyl-5-hydroxymethylpyrimidine pyrophosphate (HMP-PP) to 4-amino-2-methyl-5-hydroxymethylpyrimidine phosphate (HMP-P). In Yersinia pestis bv. Antiqua (strain Antiqua), this protein is HMP-PP phosphatase.